The primary structure comprises 595 residues: Aspartate--tRNA ligase (595 aa).

Residue glutamate 180 coordinates L-aspartate. The segment at 204–207 (QLFK) is aspartate. Arginine 226 is a binding site for L-aspartate. ATP contacts are provided by residues 226–228 (RDE) and glutamine 235. Residue histidine 454 coordinates L-aspartate. Residue glutamate 488 coordinates ATP. Arginine 495 is an L-aspartate binding site. 540 to 543 (GLDR) provides a ligand contact to ATP.

Belongs to the class-II aminoacyl-tRNA synthetase family. Type 1 subfamily. Homodimer.

It is found in the cytoplasm. It carries out the reaction tRNA(Asp) + L-aspartate + ATP = L-aspartyl-tRNA(Asp) + AMP + diphosphate. Functionally, catalyzes the attachment of L-aspartate to tRNA(Asp) in a two-step reaction: L-aspartate is first activated by ATP to form Asp-AMP and then transferred to the acceptor end of tRNA(Asp). The protein is Aspartate--tRNA ligase of Clostridium acetobutylicum (strain ATCC 824 / DSM 792 / JCM 1419 / IAM 19013 / LMG 5710 / NBRC 13948 / NRRL B-527 / VKM B-1787 / 2291 / W).